The chain runs to 55 residues: U-reduvitoxin-Pr2a (55 aa).

An N-terminal signal peptide occupies residues 1–21; sequence MMKFLLVLFLITITLITMAYS. 3 disulfide bridges follow: Cys-26-Cys-41, Cys-33-Cys-46, and Cys-40-Cys-51.

It belongs to the venom Ptu1-like knottin family. Expressed by the venom gland (posterior main gland) (at protein level).

The protein resides in the secreted. In terms of biological role, binds reversibly and blocks P/Q-type voltage-gated calcium channels (Cav). In Platymeris rhadamanthus (Red spot assassin bug), this protein is U-reduvitoxin-Pr2a.